We begin with the raw amino-acid sequence, 307 residues long: Heme A synthase (307 aa).

The Cytoplasmic portion of the chain corresponds to 1–8 (MQHNRYLK). Residues 9-29 (WFAVAATVGMLLILLGGALVT) form a helical membrane-spanning segment. Over 30–56 (KTDSGLGCGRNWPDCNGSLIPKEITPE) the chain is Extracellular. Cysteines 37 and 44 form a disulfide. Residues 57-77 (VLIEFSHRLVTGVVSISILVL) traverse the membrane as a helical segment. Residue Glu60 is part of the active site. Heme o is bound at residue His63. The Cytoplasmic segment spans residues 78–92 (TVWTWRKLGHIREVK). A helical membrane pass occupies residues 93 to 113 (LLGFLAMFFLIAQALIGAAQV). Residues 114 to 123 (LWGQGDFILA) are Extracellular-facing. A helical membrane pass occupies residues 124-144 (LHFGISLISFAAVLLLSMIVF). His125 serves as a coordination point for heme o. Over 145–161 (EVDRKFDADNVFIGKKL) the chain is Cytoplasmic. Residues 162–182 (RWHTIAVTIYSYLVVYTGALV) traverse the membrane as a helical segment. Residues 183-218 (RHTDSSLICPDWPFCYNETPLASPNNMYEWVQMGHR) lie on the Extracellular side of the membrane. Cysteines 191 and 197 form a disulfide. His217 is a binding site for heme b. Residues 219–239 (LAVLIIFIWIAYITWHAVKEY) traverse the membrane as a helical segment. Over 240-247 (KNQRVVYY) the chain is Cytoplasmic. Residues 248-268 (GWIIAFTIVFLQVIAGMLVVL) form a helical membrane-spanning segment. The Extracellular segment spans residues 269-276 (TKLNLTVA). A helical membrane pass occupies residues 277-297 (LMHSLLISLLFGLLCYMIMLV). Residue His279 coordinates heme b. The Cytoplasmic portion of the chain corresponds to 298–307 (ARSNYNEKMK).

This sequence belongs to the COX15/CtaA family. Type 1 subfamily. In terms of assembly, interacts with CtaB. It depends on heme b as a cofactor.

The protein resides in the cell membrane. It carries out the reaction Fe(II)-heme o + 2 A + H2O = Fe(II)-heme a + 2 AH2. The protein operates within porphyrin-containing compound metabolism; heme A biosynthesis; heme A from heme O: step 1/1. Its function is as follows. Catalyzes the conversion of heme O to heme A by two successive hydroxylations of the methyl group at C8. The first hydroxylation forms heme I, the second hydroxylation results in an unstable dihydroxymethyl group, which spontaneously dehydrates, resulting in the formyl group of heme A. This chain is Heme A synthase, found in Lysinibacillus sphaericus (strain C3-41).